A 476-amino-acid chain; its full sequence is Aspartyl/glutamyl-tRNA(Asn/Gln) amidotransferase subunit B (476 aa).

The protein belongs to the GatB/GatE family. GatB subfamily. Heterotrimer of A, B and C subunits.

It carries out the reaction L-glutamyl-tRNA(Gln) + L-glutamine + ATP + H2O = L-glutaminyl-tRNA(Gln) + L-glutamate + ADP + phosphate + H(+). It catalyses the reaction L-aspartyl-tRNA(Asn) + L-glutamine + ATP + H2O = L-asparaginyl-tRNA(Asn) + L-glutamate + ADP + phosphate + 2 H(+). Functionally, allows the formation of correctly charged Asn-tRNA(Asn) or Gln-tRNA(Gln) through the transamidation of misacylated Asp-tRNA(Asn) or Glu-tRNA(Gln) in organisms which lack either or both of asparaginyl-tRNA or glutaminyl-tRNA synthetases. The reaction takes place in the presence of glutamine and ATP through an activated phospho-Asp-tRNA(Asn) or phospho-Glu-tRNA(Gln). The polypeptide is Aspartyl/glutamyl-tRNA(Asn/Gln) amidotransferase subunit B (Thermosipho melanesiensis (strain DSM 12029 / CIP 104789 / BI429)).